Reading from the N-terminus, the 466-residue chain is 3-isopropylmalate dehydratase large subunit (466 aa).

[4Fe-4S] cluster is bound by residues Cys347, Cys407, and Cys410.

It belongs to the aconitase/IPM isomerase family. LeuC type 1 subfamily. As to quaternary structure, heterodimer of LeuC and LeuD. The cofactor is [4Fe-4S] cluster.

It carries out the reaction (2R,3S)-3-isopropylmalate = (2S)-2-isopropylmalate. It functions in the pathway amino-acid biosynthesis; L-leucine biosynthesis; L-leucine from 3-methyl-2-oxobutanoate: step 2/4. In terms of biological role, catalyzes the isomerization between 2-isopropylmalate and 3-isopropylmalate, via the formation of 2-isopropylmaleate. In Escherichia coli O127:H6 (strain E2348/69 / EPEC), this protein is 3-isopropylmalate dehydratase large subunit.